Reading from the N-terminus, the 291-residue chain is MKIAILSRNSKLYSTRRLIEAGRTRGHTVRILDPLRCYMRIAADGFSLHYKGKPITGFDAVIPRIGASVTRYGTAVLRQFEFMGTYTPNPSDAILRSRDKLRAHQLLASQGIDMPVTVFGDNPDDTQDLLSMLGPPPHVVKLNEGAQGAGVILTEKASASRGVVEALRGLYANFIVQEFIGEAEGADLRCFVVGDRVVAAMRRQAADGDFRSNLHLGGTAAMAEASPQEQDVAVRSARALGLAVAGVDLIRSQRGPLVLEVNSTPGLEGVEGVCGVDVAGTIIQHLEQAIR.

The 184-residue stretch at 104 to 287 folds into the ATP-grasp domain; the sequence is HQLLASQGID…VAGTIIQHLE (184 aa). ATP contacts are provided by residues lysine 141, 178–179, aspartate 187, and 211–213; these read EF and RSN. The Mg(2+) site is built by aspartate 248, glutamate 260, and asparagine 262. Residues aspartate 248, glutamate 260, and asparagine 262 each contribute to the Mn(2+) site.

The protein belongs to the RimK family. It depends on Mg(2+) as a cofactor. Mn(2+) serves as cofactor.

The protein is Probable alpha-L-glutamate ligase of Xanthomonas campestris pv. campestris (strain B100).